Reading from the N-terminus, the 20-residue chain is Dihydroorotase-like protein (20 aa).

The protein belongs to the metallo-dependent hydrolases superfamily. DHOase family. PyrC' subfamily. Heterododecamer of 6 active PyrB subunits and 6 non-catalytic PyrC' subunits.

Functionally, non-functional DHOase. In Pseudomonas fluorescens biotype A, this protein is Dihydroorotase-like protein (pyrC').